Consider the following 266-residue polypeptide: MPIGDRQNPSVEKKKNLFRLCPFWQRRSTTSSSSTQNPNQNYRSRHGNRNTDISAVSKPPLTMSSVARSLLPARRRLRLDPSSYLYFPYEPGKQVRSAIKLKNTSKSHTAFKFQTTAPKSCYMRPPGGVLAPGESVFATVFKFVEHPENNEKQPLNQKSKVKFKIMSLKVKPGVEYVPELFDEQKDQVAVEQVLRVIFIDADRPSAALEKLKRQLDEAEAAVEARKKPPPETGPRVVGEGLVIDEWKERREKYLARQQVESVDSLS.

Residues 28 to 57 (STTSSSSTQNPNQNYRSRHGNRNTDISAVS) are disordered. Residues 76–199 (RLRLDPSSYL…VEQVLRVIFI (124 aa)) enclose the MSP domain. The stretch at 200 to 228 (DADRPSAALEKLKRQLDEAEAAVEARKKP) forms a coiled coil. Basic and acidic residues predominate over residues 219–229 (EAAVEARKKPP). A disordered region spans residues 219 to 239 (EAAVEARKKPPPETGPRVVGE). Ser264 bears the Phosphoserine mark.

This sequence belongs to the VAMP-associated protein (VAP) (TC 9.B.17) family.

In terms of biological role, may play a role in vesicle trafficking. In Arabidopsis thaliana (Mouse-ear cress), this protein is Vesicle-associated protein 4-1 (PVA41).